Here is a 471-residue protein sequence, read N- to C-terminus: MGDSRDSRSPDSSSVSSPPSGQRSPPLAPSAAAMTSLPPITSAVNSPISSMGSPFSVISSSLGSPCLPGTPSVGYGPISSPQINSTVSMSGLHAVSSSDDVKPPFGLKPLSSHSPGPMVSQKRLCAICGDRSSGKHYGVYSCEGCKGFFKRTVRKDLSYTCRDNKDCLVDKRQRNRCQYCRYQKCLAMGMKREVVQDERQRSVQEERQRNKERDGEVESSSAANEEMPVEKILEAEMAVEQKTELHADGSSGGSSPNDPVTNICQAADKQLFTLVEWAKRIPHFSELSLDDQVILLRAGWNELLIASFSHRSITVKDGILLATGLHVHRNSAHSAGVGAIFDRESAHNAEVGAIFDRVLTELVSKMRDMQMDKTELGCLRAIILFNPDAKGLSSPSEVELLREKVYASLEAYCKQRYPDQQGRFAKLLLRLPALRSIGLKCLEHLFFFKLIGDTPIDTFLMEMLEAPHQLT.

Residues 1–34 (MGDSRDSRSPDSSSVSSPPSGQRSPPLAPSAAAM) form a disordered region. The segment at 1–102 (MGDSRDSRSP…HAVSSSDDVK (102 aa)) is modulating. Residues 10-25 (PDSSSVSSPPSGQRSP) are compositionally biased toward low complexity. Positions 122 to 197 (KRLCAICGDR…MGMKREVVQD (76 aa)) form a DNA-binding region, nuclear receptor. NR C4-type zinc fingers lie at residues 125–145 (CAIC…CEGC) and 161–185 (CRDN…YQKC). Residues 196–216 (QDERQRSVQEERQRNKERDGE) show a composition bias toward basic and acidic residues. Residues 196–226 (QDERQRSVQEERQRNKERDGEVESSSAANEE) form a disordered region. Residues 198-221 (ERQRSVQEERQRNKERDGEVESSS) are hinge. Positions 224 to 467 (NEEMPVEKIL…TFLMEMLEAP (244 aa)) constitute an NR LBD domain.

The protein belongs to the nuclear hormone receptor family. NR2 subfamily. As to quaternary structure, homodimer. Heterodimer; with a rar molecule. Binds DNA preferentially as a rar/rxr heterodimer. Heterodimerizes with rarga. In terms of tissue distribution, shows uniform expression from the blastula to mid-gastrula stages. At 12 hours post-fertilization (hpf), expressed ubiquitously but more weakly. At 24 hpf, restricted to the ventral diencephalon, pharangeal endoderm and trunk and tail mesoderm; mesoderm expression is in medial cells of each somite along the dorsoventral axis, forming stripes. At 48 hpf, expressed in forebrain, eye, midbrain and anterior hindbrain.

It localises to the nucleus. Functionally, receptor for retinoic acid. Retinoic acid receptors bind as heterodimers to their target response elements in response to their ligands, all-trans or 9-cis retinoic acid, and regulate gene expression in various biological processes. The rar/rxr heterodimers bind to the retinoic acid response elements (RARE) composed of tandem 5'-AGGTCA-3' sites known as DR1-DR5. The high affinity ligand for rxrs is 9-cis retinoic acid. This is Retinoic acid receptor RXR-beta-A (rxrba) from Danio rerio (Zebrafish).